The primary structure comprises 120 residues: Large ribosomal subunit protein bL19 (120 aa).

This sequence belongs to the bacterial ribosomal protein bL19 family.

Its function is as follows. This protein is located at the 30S-50S ribosomal subunit interface and may play a role in the structure and function of the aminoacyl-tRNA binding site. The sequence is that of Large ribosomal subunit protein bL19 from Synechococcus sp. (strain ATCC 27144 / PCC 6301 / SAUG 1402/1) (Anacystis nidulans).